The sequence spans 113 residues: DNA-binding protein PTO0204 (113 aa).

It belongs to the PDCD5 family.

This chain is DNA-binding protein PTO0204, found in Picrophilus torridus (strain ATCC 700027 / DSM 9790 / JCM 10055 / NBRC 100828 / KAW 2/3).